Here is a 61-residue protein sequence, read N- to C-terminus: MEKFIELSLKEVTAITGGKYYGNGVHCGKHSCTVDWGTAIGNIGNNAAANWATGGNAGWNK.

Positions 1–18 are excised as a propeptide; the sequence is MEKFIELSLKEVTAITGG. C27 and C32 are oxidised to a cystine.

Belongs to the bacteriocin class IIA/YGNGV family.

It localises to the secreted. Its function is as follows. Bactericidal activity; inhibits closely related Lactobacilli, Listeria monocytogenes and ivanovvi, Enterococcus faecalis, Carnobacterium sp and Brocothrix thermosphacta. The polypeptide is Bacteriocin sakacin-P (sakP) (Latilactobacillus sakei (Lactobacillus sakei)).